Here is a 157-residue protein sequence, read N- to C-terminus: 2-C-methyl-D-erythritol 2,4-cyclodiphosphate synthase (157 aa).

Residues Asp8 and His10 each coordinate a divalent metal cation. 4-CDP-2-C-methyl-D-erythritol 2-phosphate is bound by residues 8-10 (DVH) and 34-35 (HS). His42 contributes to the a divalent metal cation binding site. Residues 56 to 58 (DIG), 61 to 65 (FPDTD), 100 to 106 (AQRPKMA), 132 to 135 (TTTE), Phe139, and Arg142 contribute to the 4-CDP-2-C-methyl-D-erythritol 2-phosphate site.

This sequence belongs to the IspF family. In terms of assembly, homotrimer. Requires a divalent metal cation as cofactor.

It catalyses the reaction 4-CDP-2-C-methyl-D-erythritol 2-phosphate = 2-C-methyl-D-erythritol 2,4-cyclic diphosphate + CMP. The protein operates within isoprenoid biosynthesis; isopentenyl diphosphate biosynthesis via DXP pathway; isopentenyl diphosphate from 1-deoxy-D-xylulose 5-phosphate: step 4/6. In terms of biological role, involved in the biosynthesis of isopentenyl diphosphate (IPP) and dimethylallyl diphosphate (DMAPP), two major building blocks of isoprenoid compounds. Catalyzes the conversion of 4-diphosphocytidyl-2-C-methyl-D-erythritol 2-phosphate (CDP-ME2P) to 2-C-methyl-D-erythritol 2,4-cyclodiphosphate (ME-CPP) with a corresponding release of cytidine 5-monophosphate (CMP). In Geobacter sulfurreducens (strain ATCC 51573 / DSM 12127 / PCA), this protein is 2-C-methyl-D-erythritol 2,4-cyclodiphosphate synthase.